We begin with the raw amino-acid sequence, 281 residues long: Light-independent protochlorophyllide reductase iron-sulfur ATP-binding protein (281 aa).

Residues 10-15 (GIGKST) and K39 each bind ATP. S14 is a binding site for Mg(2+). [4Fe-4S] cluster contacts are provided by C95 and C129. 180 to 181 (NR) is an ATP binding site.

It belongs to the NifH/BchL/ChlL family. Homodimer. Protochlorophyllide reductase is composed of three subunits; ChlL, ChlN and ChlB. [4Fe-4S] cluster is required as a cofactor.

The catalysed reaction is chlorophyllide a + oxidized 2[4Fe-4S]-[ferredoxin] + 2 ADP + 2 phosphate = protochlorophyllide a + reduced 2[4Fe-4S]-[ferredoxin] + 2 ATP + 2 H2O. It participates in porphyrin-containing compound metabolism; chlorophyll biosynthesis (light-independent). Component of the dark-operative protochlorophyllide reductase (DPOR) that uses Mg-ATP and reduced ferredoxin to reduce ring D of protochlorophyllide (Pchlide) to form chlorophyllide a (Chlide). This reaction is light-independent. The L component serves as a unique electron donor to the NB-component of the complex, and binds Mg-ATP. The polypeptide is Light-independent protochlorophyllide reductase iron-sulfur ATP-binding protein (Thermosynechococcus vestitus (strain NIES-2133 / IAM M-273 / BP-1)).